A 212-amino-acid chain; its full sequence is Orotate phosphoribosyltransferase (212 aa).

Residues arginine 97, lysine 101, histidine 103, and 123–131 (DDLISTGGS) contribute to the 5-phospho-alpha-D-ribose 1-diphosphate site. Residue serine 127 coordinates orotate.

Belongs to the purine/pyrimidine phosphoribosyltransferase family. PyrE subfamily. Homodimer. The cofactor is Mg(2+).

The catalysed reaction is orotidine 5'-phosphate + diphosphate = orotate + 5-phospho-alpha-D-ribose 1-diphosphate. The protein operates within pyrimidine metabolism; UMP biosynthesis via de novo pathway; UMP from orotate: step 1/2. Functionally, catalyzes the transfer of a ribosyl phosphate group from 5-phosphoribose 1-diphosphate to orotate, leading to the formation of orotidine monophosphate (OMP). The polypeptide is Orotate phosphoribosyltransferase (Lactiplantibacillus plantarum (strain ATCC BAA-793 / NCIMB 8826 / WCFS1) (Lactobacillus plantarum)).